The sequence spans 338 residues: Activator of 90 kDa heat shock protein ATPase homolog 1 (338 aa).

N6-acetyllysine is present on lysine 3. Lysine 182 participates in a covalent cross-link: Glycyl lysine isopeptide (Lys-Gly) (interchain with G-Cter in SUMO1). Residue serine 193 is modified to Phosphoserine. A Glycyl lysine isopeptide (Lys-Gly) (interchain with G-Cter in SUMO2) cross-link involves residue lysine 203. Lysine 212 is modified (N6-acetyllysine). A Phosphotyrosine; by ABL modification is found at tyrosine 223.

The protein belongs to the AHA1 family. As to quaternary structure, interacts with HSPCA/HSP90. Interacts with HSP90AA1; the interaction activates HSP90AA1 ATPase activity. Interacts with HSP90AB1. Interacts with GCH1. Interacts with SRPK1. Interacts with FLCN. Phosphorylation at Tyr-223 enhances binding to chaperone HSP90AA1.

The protein resides in the cytoplasm. The protein localises to the cytosol. It localises to the endoplasmic reticulum. Functionally, acts as a co-chaperone of HSP90AA1. Activates the ATPase activity of HSP90AA1 leading to increase in its chaperone activity. Competes with the inhibitory co-chaperone FNIP1 for binding to HSP90AA1, thereby providing a reciprocal regulatory mechanism for chaperoning of client proteins. Competes with the inhibitory co-chaperone TSC1 for binding to HSP90AA1, thereby providing a reciprocal regulatory mechanism for chaperoning of client proteins. The sequence is that of Activator of 90 kDa heat shock protein ATPase homolog 1 (Ahsa1) from Mus musculus (Mouse).